The primary structure comprises 364 residues: Fructose-1,6-bisphosphatase class 1 2 (364 aa).

4 residues coordinate Mg(2+): Glu-101, Asp-123, Leu-125, and Asp-126. Substrate-binding positions include Asp-126 to Ser-129 and Asn-218. Glu-290 provides a ligand contact to Mg(2+).

Belongs to the FBPase class 1 family. Homotetramer. It depends on Mg(2+) as a cofactor.

The protein resides in the cytoplasm. The enzyme catalyses beta-D-fructose 1,6-bisphosphate + H2O = beta-D-fructose 6-phosphate + phosphate. It functions in the pathway carbohydrate biosynthesis; gluconeogenesis. The chain is Fructose-1,6-bisphosphatase class 1 2 from Cupriavidus taiwanensis (strain DSM 17343 / BCRC 17206 / CCUG 44338 / CIP 107171 / LMG 19424 / R1) (Ralstonia taiwanensis (strain LMG 19424)).